A 96-amino-acid chain; its full sequence is Aspartyl/glutamyl-tRNA(Asn/Gln) amidotransferase subunit C (96 aa).

This sequence belongs to the GatC family. Heterotrimer of A, B and C subunits.

The enzyme catalyses L-glutamyl-tRNA(Gln) + L-glutamine + ATP + H2O = L-glutaminyl-tRNA(Gln) + L-glutamate + ADP + phosphate + H(+). The catalysed reaction is L-aspartyl-tRNA(Asn) + L-glutamine + ATP + H2O = L-asparaginyl-tRNA(Asn) + L-glutamate + ADP + phosphate + 2 H(+). Allows the formation of correctly charged Asn-tRNA(Asn) or Gln-tRNA(Gln) through the transamidation of misacylated Asp-tRNA(Asn) or Glu-tRNA(Gln) in organisms which lack either or both of asparaginyl-tRNA or glutaminyl-tRNA synthetases. The reaction takes place in the presence of glutamine and ATP through an activated phospho-Asp-tRNA(Asn) or phospho-Glu-tRNA(Gln). This is Aspartyl/glutamyl-tRNA(Asn/Gln) amidotransferase subunit C from Bacillus anthracis (strain A0248).